Here is a 1111-residue protein sequence, read N- to C-terminus: MFNPMTPPQVNSYSEPCCLRPLHSQGVPSMGTEGLSGLPFCHQANFMSGSQGYGAARETSSCTEGSLFPPPPPPRSSVKLTKKRALSISPLSDASLDLQTVIRTSPSSLVAFINSRCTSPGGSYGHLSIGTMSPSLGFPPQMSHQKGTSPPYGVQPCVPHDSTRGSMMLHPQSRGPRATCQLKSELDMMVGKCPEDPLEGDMSSPNSTGTQDHLLGMLDGREDLEREEKPEPESVYETDCRWDGCSQEFDSQEQLVHHINSEHIHGERKEFVCHWGGCSRELRPFKAQYMLVVHMRRHTGEKPHKCTFEGCRKSYSRLENLKTHLRSHTGEKPYMCEQEGCSKAFSNASDRAKHQNRTHSNEKPYVCKLPGCTKRYTDPSSLRKHVKTVHGPDAHVTKRHRGDGPLPRAQPLSTVEPKREREGGSGREESRLTVPESAMPQQSPGAQSSCSSDHSPAGSAANTDSGVEMAGNAGGSTEDLSSLDEGPCVSATGLSTLRRLENLRLDQLHQLRPIGSRGLKLPSLTHAGAPVSRRLGPPVSLDRRSSSSSSMSSAYTVSRRSSLASPFPPGTPPENGASSLPGLTPAQHYMLRARYASARGSGTPPTAAHSLDRMGGLSVPPWRSRTEYPGYNPNAGVTRRASDPARAADHPAPARVQRFKSLGCVHTPPSVATGRNFDPHHPTSVYSPQPPSITENVAMDTRGLQEEPEVGTSVMGNGLNPYMDFSSTDTLGYGGPEGTAAEPYEARGPGSLPLGPGPPTNYGPGHCAQQVSYPDPTPENWGEFPSHAGVYPSNKAPGAAYSQCPRLEHYGQVQVKPEQGCPVGSDSTGLAPCLNAHPSEGSPGPQPLFSHHPQLPQPQYPQSGPYPQPPHGYLSTEPRLGLNFNPSSSHSTGQLKAQLVCNYVQSQQELLWEGRNRGGLPNQELPYQSPKFLGGSQVSQSPAKTPAAAAAAYGSGFAPASANHKSGSYPAPSPCHETFTVGVNRPSHRPAAPPRLLPPLSPCYGPLKVGDTNPSCGHPEVGRLGAGPALYPPPEGQVCNALDSLDLDNTQLDFVAILDEAQGLSPPLSHEQGDSSKNTPSPSGPPNMAVGNMSVLLGSLPGETQFLNSSA.

Residues 52 to 78 are disordered; the sequence is GYGAARETSSCTEGSLFPPPPPPRSSV. The tract at residues 123–127 is interaction with SUFU; it reads SYGHL. 5 C2H2-type zinc fingers span residues 238-263, 271-298, 304-328, 334-359, and 365-390; these read TDCR…NSEH, FVCH…MRRH, HKCT…LRSH, YMCE…NRTH, and YVCK…KTVH. An interaction with DNA region spans residues 286–294; that stretch reads KAQYMLVVH. 2 interaction with DNA regions span residues 348 to 353 and 378 to 384; these read ASDRAK and DPSSLRK. The disordered stretch occupies residues 378–487; the sequence is DPSSLRKHVK…EDLSSLDEGP (110 aa). A compositionally biased stretch (basic and acidic residues) spans 416–431; it reads EPKREREGGSGREESR. Over residues 439-465 the composition is skewed to polar residues; that stretch reads MPQQSPGAQSSCSSDHSPAGSAANTDS. The residue at position 520 (Lys-520) is an N6-acetyllysine. Disordered stretches follow at residues 528-583, 598-649, 673-692, and 832-891; these read GAPV…LPGL, ARGS…RAAD, TGRN…QPPS, and PCLN…SSHS. A compositionally biased stretch (low complexity) spans 546–562; it reads SSSSSMSSAYTVSRRSS. Residues 640–649 are compositionally biased toward basic and acidic residues; it reads RASDPARAAD. Pro residues predominate over residues 855–870; sequence LPQPQYPQSGPYPQPP. Lys-1008 is covalently cross-linked (Glycyl lysine isopeptide (Lys-Gly) (interchain with G-Cter in SUMO2)). A disordered region spans residues 1064–1093; the sequence is LSPPLSHEQGDSSKNTPSPSGPPNMAVGNM.

It belongs to the GLI C2H2-type zinc-finger protein family. In terms of assembly, interacts with KIF7. Interacts with STK36. Interacts with ZIC1; the interaction enhances transcription activation. Interacts with SUFU; this inhibits transcriptional activation by GLI1. In terms of processing, phosphorylated in vitro by ULK3. Post-translationally, acetylation at Lys-520 down-regulates transcriptional activity. Deacetylated by HDAC1. Ubiquitinated by the CRL2(FEM1B) complex, suppressing GLI1 transcriptional activator activity.

The protein resides in the cytoplasm. It localises to the nucleus. Functionally, acts as a transcriptional activator. Binds to the DNA consensus sequence 5'-GACCACCCA-3'. Regulates the transcription of specific genes during normal development. Plays a role in craniofacial development and digital development, as well as development of the central nervous system and gastrointestinal tract. Mediates SHH signaling. Plays a role in cell proliferation and differentiation via its role in SHH signaling. This is Zinc finger protein GLI1 (Gli1) from Mus musculus (Mouse).